The sequence spans 281 residues: Ras-related protein Rab-40C (281 aa).

GTP contacts are provided by S23, G26, K27, and S46. Residues 41–49 (SPYAYSNGI) form a switch-I region. 2 residues coordinate Mg(2+): S46 and D69. Positions 72, 126, and 127 each coordinate GTP. Residues 72–88 (GQGRFCTIFRSYSRGAQ) are switch-II. Residues 175-228 (LMRHGMEKIWRPNRVFSLQDLCCRAIVSCTPVHLIDKLPLPVTIKSHLKSFSMA) form the SOCS box domain. The interval 245–281 (SGAGGGGSKGNSLKRSKSIRPPQSPPQNCSRSNCKIS) is disordered. Positions 270 to 281 (PQNCSRSNCKIS) are enriched in polar residues. The S-palmitoyl cysteine moiety is linked to residue C273. The S-geranylgeranyl cysteine moiety is linked to residue C278.

The protein belongs to the small GTPase superfamily. Rab family. In terms of assembly, component of the cullin-5-RING E3 ubiquitin-protein ligase complex (ECS(RAB40C) complex) composed of CUL5, Elongin BC (ELOB and ELOC), RNF7/RBX2 and RAB40C. Interacts with protein phosphatase 6 (PP6) complex components ANKRD28, ANKRD52, PPP6C, PP6R1 and PP6R2; the interaction leads to ANKRD28 ubiquitination and decreased PP6 activity. Interacts with DAB2IP; DAB2IP acts as a GAP for RAB40C. Mg(2+) serves as cofactor.

It is found in the cell membrane. The protein localises to the cytoplasm. The protein resides in the cytosol. Its subcellular location is the golgi apparatus membrane. It carries out the reaction GTP + H2O = GDP + phosphate + H(+). It participates in protein modification; protein ubiquitination. With respect to regulation, regulated by guanine nucleotide exchange factors (GEFs) which promote the exchange of bound GDP for free GTP. Regulated by GTPase activating proteins (GAPs) including DAB2IP, which increase the GTP hydrolysis activity. Inhibited by GDP dissociation inhibitors (GDIs). Its function is as follows. RAB40C small GTPase acts as substrate-recognition component of the ECS(RAB40C) E3 ubiquitin ligase complex which mediates the ubiquitination and subsequent proteasomal degradation of target proteins. The Rab40 subfamily belongs to the Rab family that are key regulators of intracellular membrane trafficking, from the formation of transport vesicles to their fusion with membranes. Rabs cycle between an inactive GDP-bound form and an active GTP-bound form that is able to recruit to membranes different sets of downstream effectors directly responsible for vesicle formation, movement, tethering and fusion. As part of the ECS(RAB40C) complex, mediates ANKRD28 ubiquitination and degradation, thereby inhibiting protein phosphatase 6 (PP6) complex activity and focal adhesion assembly during cell migration. Also negatively regulate lipid droplets accumulation in a GTP-dependent manner. The chain is Ras-related protein Rab-40C from Homo sapiens (Human).